An 861-amino-acid polypeptide reads, in one-letter code: Nuclear cap-binding protein complex subunit 1 (861 aa).

Positions 22 to 30 (RMPKRQRIP) match the Nuclear localization signal motif. In terms of domain architecture, MIF4G spans 36–264 (CKEMMPDIRT…LVRVVLPNVK (229 aa)).

Belongs to the NCBP1 family. In terms of assembly, component of the nuclear cap-binding complex (CBC), a heterodimer composed of STO1/CBC1 and CBC2 that interacts with capped RNAs. The complex interacts strongly with the importin subunit alpha SRP1. The SRP1-CBC trimer also binds to capped RNAs, but formation of the importin alpha/beta heterodimer upon binding of KAP95 to SRP1 in the cytoplasm causes dissociation of CBC from the RNA. The CBC complex is part of the commitment complex 1 (CC1), binding to the cap of pre-mRNA and interacting with U1 snRNP subunits MUD2 and SNU56. The CBC complex is part of the NRD1 complex, composed of CBC2, NAB1, NRD1, SEN1 and STO1/CBC2. The CBC complex also interacts with NPL3 and eIF4G (TIF4631 and TIF4632).

The protein localises to the nucleus. It is found in the cytoplasm. It localises to the perinuclear region. In terms of biological role, component of the CBC complex, which binds co-transcriptionally to the 5'-cap of pre-mRNAs and is involved in maturation, export and degradation of nuclear mRNAs. The CBC complex is required for efficient pre-mRNA splicing through efficient commitment complex and spliceosome formation. Together with NPL3, the CBC complex is required for export of mRNAs out of the nucleus. The CBC complex is also involved in nuclear mRNA degradation, probably by directing the mRNAs to the sites of degradation. Affects replication of the positive-strand RNA virus BMV. The protein is Nuclear cap-binding protein complex subunit 1 (STO1) of Saccharomyces cerevisiae (strain ATCC 204508 / S288c) (Baker's yeast).